Here is a 237-residue protein sequence, read N- to C-terminus: Class B acid phosphatase (237 aa).

The first 25 residues, 1–25 (MRKVSLALSAACLLFTLNYTASALA), serve as a signal peptide directing secretion. D69 (nucleophile) is an active-site residue. Mg(2+) contacts are provided by D69 and D71. The active-site Proton donor is the D71. Substrate contacts are provided by residues 137-138 (TG) and K177. Residue D192 participates in Mg(2+) binding.

This sequence belongs to the class B bacterial acid phosphatase family. Homotetramer. Mg(2+) is required as a cofactor.

Its subcellular location is the periplasm. The enzyme catalyses a phosphate monoester + H2O = an alcohol + phosphate. Functionally, dephosphorylates several organic phosphate monoesters. Also has a phosphotransferase activity catalyzing the transfer of low-energy phosphate groups from organic phosphate monoesters to free hydroxyl groups of various organic compounds. This Citrobacter rodentium (strain ICC168) (Citrobacter freundii biotype 4280) protein is Class B acid phosphatase.